A 331-amino-acid chain; its full sequence is CRISPR-associated endonuclease Cas1 (331 aa).

Mn(2+) contacts are provided by Glu-158, His-223, and Asp-238.

Belongs to the CRISPR-associated endonuclease Cas1 family. Homodimer, forms a heterotetramer with a Cas2 homodimer. It depends on Mg(2+) as a cofactor. Mn(2+) serves as cofactor.

CRISPR (clustered regularly interspaced short palindromic repeat), is an adaptive immune system that provides protection against mobile genetic elements (viruses, transposable elements and conjugative plasmids). CRISPR clusters contain spacers, sequences complementary to antecedent mobile elements, and target invading nucleic acids. CRISPR clusters are transcribed and processed into CRISPR RNA (crRNA). Acts as a dsDNA endonuclease. Involved in the integration of spacer DNA into the CRISPR cassette. Plasmid targeted by CRISPR locus P1 transform wild-type cells very poorly. In Haloferax volcanii (strain ATCC 29605 / DSM 3757 / JCM 8879 / NBRC 14742 / NCIMB 2012 / VKM B-1768 / DS2) (Halobacterium volcanii), this protein is CRISPR-associated endonuclease Cas1.